We begin with the raw amino-acid sequence, 325 residues long: Isoaspartyl peptidase/L-asparaginase (325 aa).

Thr-193 acts as the Nucleophile in catalysis. Substrate is bound by residues 221-224 and 243-246; these read RIGD and TGKG.

It belongs to the Ntn-hydrolase family. In terms of assembly, heterotetramer of two alpha and two beta chains arranged as a dimer of alpha/beta heterodimers. Cleaved into an alpha and beta chain by autocatalysis; this activates the enzyme. The N-terminal residue of the beta subunit is responsible for the nucleophile hydrolase activity. As to expression, expressed in ripening seeds and developing nodules.

The catalysed reaction is Cleavage of a beta-linked Asp residue from the N-terminus of a polypeptide.. Degrades proteins damaged by L-isoaspartyl residue formation (also known as beta-Asp residues). Also has L-asparaginase activity, which is used to liberate stored nitrogen during seed development. This Lupinus luteus (European yellow lupine) protein is Isoaspartyl peptidase/L-asparaginase.